The chain runs to 290 residues: N-acetylmannosamine kinase (290 aa).

Residues 6–13 (ALDIGGTK) and 132–139 (GVGGGIIL) each bind ATP. Zn(2+)-binding residues include H156, C166, C168, and C173.

It belongs to the ROK (NagC/XylR) family. NanK subfamily. Homodimer.

The enzyme catalyses an N-acyl-D-mannosamine + ATP = an N-acyl-D-mannosamine 6-phosphate + ADP + H(+). It functions in the pathway amino-sugar metabolism; N-acetylneuraminate degradation; D-fructose 6-phosphate from N-acetylneuraminate: step 2/5. Functionally, catalyzes the phosphorylation of N-acetylmannosamine (ManNAc) to ManNAc-6-P. The chain is N-acetylmannosamine kinase from Yersinia pestis (strain Pestoides F).